The following is a 427-amino-acid chain: Gamma-glutamyl phosphate reductase (427 aa).

This sequence belongs to the gamma-glutamyl phosphate reductase family.

Its subcellular location is the cytoplasm. It catalyses the reaction L-glutamate 5-semialdehyde + phosphate + NADP(+) = L-glutamyl 5-phosphate + NADPH + H(+). It functions in the pathway amino-acid biosynthesis; L-proline biosynthesis; L-glutamate 5-semialdehyde from L-glutamate: step 2/2. Catalyzes the NADPH-dependent reduction of L-glutamate 5-phosphate into L-glutamate 5-semialdehyde and phosphate. The product spontaneously undergoes cyclization to form 1-pyrroline-5-carboxylate. In Brucella ovis (strain ATCC 25840 / 63/290 / NCTC 10512), this protein is Gamma-glutamyl phosphate reductase.